A 224-amino-acid polypeptide reads, in one-letter code: Thymidine kinase, cytosolic (224 aa).

Ser13 carries the post-translational modification Phosphoserine. ATP is bound by residues 26 to 33, 58 to 60, and 98 to 101; these read GPMFSGKS, DTR, and DEGQ. Glu99 serves as the catalytic Proton acceptor. Phe129 lines the substrate pocket. Zn(2+) is bound by residues Cys154 and Cys157. Residues 173–177 and Tyr182 each bind substrate; that span reads VEVIG. Positions 186 and 189 each coordinate Zn(2+). A KEN box motif is present at residues 203 to 205; sequence KEN.

The protein belongs to the thymidine kinase family. As to quaternary structure, homotetramer. Tetramerization from dimerization is induced by ATP and increases catalytic efficiency due to a high affinity for thymidine. Tetramerization is inhibited by phosphorylation at Ser-13. Interacts (via the KEN box) with FZR1. Post-translationally, phosphorylated on Ser-13 in mitosis. Phosphorylation of Ser-13 by CDK1 during mitosis reduces homotetramerization and catalytic efficiency when DNA replication is complete and intracellular TK1 is still present at a high level. Polyubiquitinated. Postmitosis, ubiquitination leads to proteasomal degradation. The KEN box sequence located at the C-terminal region targets for degradation by the anaphase promoting complex (APC/C) activated and rate-limited by FZR1.

The protein localises to the cytoplasm. It catalyses the reaction thymidine + ATP = dTMP + ADP + H(+). Cell-cycle-regulated enzyme of importance in nucleotide metabolism. Catalyzes the first enzymatic step in the salvage pathway converting thymidine into thymidine monophosphate. Transcriptional regulation limits expression to the S phase of the cell cycle and transient expression coincides with the oscillation in the intracellular dTTP concentration. The chain is Thymidine kinase, cytosolic (TK1) from Gallus gallus (Chicken).